The sequence spans 396 residues: Elongation factor Tu 2 (396 aa).

The tr-type G domain maps to 10–206 (KPHVNVGTIG…ALDTYIPTPE (197 aa)). A G1 region spans residues 19–26 (GHVDHGKT). 19–26 (GHVDHGKT) lines the GTP pocket. Residue Thr26 coordinates Mg(2+). Positions 60–64 (GITIN) are G2. The tract at residues 81–84 (DCPG) is G3. GTP contacts are provided by residues 81-85 (DCPGH) and 136-139 (NKAD). The segment at 136-139 (NKAD) is G4. The tract at residues 174–176 (SAK) is G5.

Belongs to the TRAFAC class translation factor GTPase superfamily. Classic translation factor GTPase family. EF-Tu/EF-1A subfamily. Monomer.

It is found in the cytoplasm. The enzyme catalyses GTP + H2O = GDP + phosphate + H(+). Functionally, GTP hydrolase that promotes the GTP-dependent binding of aminoacyl-tRNA to the A-site of ribosomes during protein biosynthesis. This is Elongation factor Tu 2 from Methylobacillus flagellatus (strain ATCC 51484 / DSM 6875 / VKM B-1610 / KT).